The primary structure comprises 220 residues: Putative vesicle-associated membrane protein 726 (220 aa).

Topologically, residues 1-196 (MGQQSLIYSF…LWFENMKIKL (196 aa)) are cytoplasmic. The Longin domain maps to 10-114 (FVARGTVILA…SLNKEFGSKL (105 aa)). Residues 130–190 (KLSKVKAQVT…TKMKRKLWFE (61 aa)) form the v-SNARE coiled-coil homology domain. The chain crosses the membrane as a helical; Anchor for type IV membrane protein span at residues 197 to 217 (IVFGIIVALILIIILSVCHGF). The Vesicular portion of the chain corresponds to 218-220 (KCT).

It belongs to the synaptobrevin family. Expressed in flowers, leaves, stems and roots.

It is found in the cell membrane. The protein localises to the early endosome membrane. In terms of biological role, involved in the targeting and/or fusion of transport vesicles to their target membrane. The chain is Putative vesicle-associated membrane protein 726 (VAMP726) from Arabidopsis thaliana (Mouse-ear cress).